The primary structure comprises 234 residues: Adenylate dimethylallyltransferase (234 aa).

The protein belongs to the isopentenyl transferase family.

The enzyme catalyses dimethylallyl diphosphate + AMP = N(6)-(dimethylallyl)adenosine 5'-phosphate + diphosphate. Transfers dimethylallyl groups to AMP as part of the biosynthesis of cytokinin phytohormones. This is Adenylate dimethylallyltransferase (ptz) from Pseudomonas savastanoi (Pseudomonas syringae pv. savastanoi).